We begin with the raw amino-acid sequence, 406 residues long: Tryptophan 2,3-dioxygenase A (406 aa).

Substrate contacts are provided by residues 71-75 and Arg143; that span reads FIVTH. His327 is a heme binding site. Residue Thr341 coordinates substrate.

The protein belongs to the tryptophan 2,3-dioxygenase family. As to quaternary structure, homotetramer. Dimer of dimers. It depends on heme as a cofactor.

It catalyses the reaction L-tryptophan + O2 = N-formyl-L-kynurenine. Its pathway is amino-acid degradation; L-tryptophan degradation via kynurenine pathway; L-kynurenine from L-tryptophan: step 1/2. In terms of biological role, heme-dependent dioxygenase that catalyzes the oxidative cleavage of the L-tryptophan (L-Trp) pyrrole ring and converts L-tryptophan to N-formyl-L-kynurenine. Catalyzes the oxidative cleavage of the indole moiety. This chain is Tryptophan 2,3-dioxygenase A, found in Danio rerio (Zebrafish).